A 764-amino-acid chain; its full sequence is 5-methyltetrahydropteroyltriglutamate--homocysteine methyltransferase (764 aa).

5-methyltetrahydropteroyltri-L-glutamate is bound by residues 16–19 (RELK) and lysine 121. L-homocysteine contacts are provided by residues 440-442 (IGS) and glutamate 493. L-methionine contacts are provided by residues 440–442 (IGS) and glutamate 493. Residues 524–525 (RC) and tryptophan 570 each bind 5-methyltetrahydropteroyltri-L-glutamate. Aspartate 608 is a binding site for L-homocysteine. Aspartate 608 is a binding site for L-methionine. A 5-methyltetrahydropteroyltri-L-glutamate-binding site is contributed by glutamate 614. Histidine 650, cysteine 652, and glutamate 674 together coordinate Zn(2+). Histidine 703 (proton donor) is an active-site residue. Cysteine 735 is a binding site for Zn(2+).

This sequence belongs to the vitamin-B12 independent methionine synthase family. It depends on Zn(2+) as a cofactor.

The enzyme catalyses 5-methyltetrahydropteroyltri-L-glutamate + L-homocysteine = tetrahydropteroyltri-L-glutamate + L-methionine. It functions in the pathway amino-acid biosynthesis; L-methionine biosynthesis via de novo pathway; L-methionine from L-homocysteine (MetE route): step 1/1. Catalyzes the transfer of a methyl group from 5-methyltetrahydrofolate to homocysteine resulting in methionine formation. The sequence is that of 5-methyltetrahydropteroyltriglutamate--homocysteine methyltransferase from Burkholderia ambifaria (strain MC40-6).